Consider the following 200-residue polypeptide: Probable nicotinate-nucleotide adenylyltransferase (200 aa).

It belongs to the NadD family.

The catalysed reaction is nicotinate beta-D-ribonucleotide + ATP + H(+) = deamido-NAD(+) + diphosphate. The protein operates within cofactor biosynthesis; NAD(+) biosynthesis; deamido-NAD(+) from nicotinate D-ribonucleotide: step 1/1. Catalyzes the reversible adenylation of nicotinate mononucleotide (NaMN) to nicotinic acid adenine dinucleotide (NaAD). This is Probable nicotinate-nucleotide adenylyltransferase from Clostridium acetobutylicum (strain ATCC 824 / DSM 792 / JCM 1419 / IAM 19013 / LMG 5710 / NBRC 13948 / NRRL B-527 / VKM B-1787 / 2291 / W).